Reading from the N-terminus, the 215-residue chain is MENPVRINTLYNVFVERYIENLSIYSIPINSTCGIHIGEIKGTFKRCFLKILNMCINDKELSFNILIKTLKDVTSTLSQKEKEELSKEIGIDILNNDPKYVPEIIRNCSSSADVTNIIDIQTLDVGKCIAPYDKQILLQIVNSGTAEANCVMNSIMNSMNRRYIDNANIYNYLNLTNRPWFIFSIIIIAIIFVIGICSIKRRIGIKYKYGTFLYV.

3 disulfides stabilise this stretch: C33–C55, C47–C128, and C108–C150. The chain crosses the membrane as a helical span at residues 179–199 (PWFIFSIIIIAIIFVIGICSI).

It belongs to the orthopoxvirus OPG053 family. Component of the entry fusion complex (EFC) composed of OPG053, OPG076, OPG086, OPG094, OPG095, OPG099, OPG107, OPG143, OPG104, OPG147 and OPG155. Except for OPG095 and OPG052, each of the EFC proteins is required for assembly or stability of the complex. Post-translationally, disulfid bonds are oxidized in the cytoplasm by OPG088 protein. In terms of processing, unglycosylated because produced in viral factories instead of the classic ER -Golgi route.

The protein localises to the virion membrane. Functionally, component of the entry fusion complex (EFC), which consists of 11 proteins. During cell infection, this complex mediates entry of the virion core into the host cytoplasm by a two-step mechanism consisting of lipid mixing of the viral and cellular membranes and subsequent pore formation. This Sus scrofa (Pig) protein is EFC-associated protein OPG053 (OPG053).